A 584-amino-acid chain; its full sequence is Optineurin (584 aa).

Residues 1-32 form a disordered region; sequence MSHQPLSCLTEKGDSPCETPGNGPSNMVHPSL. The stretch at 38 to 180 forms a coiled coil; the sequence is EELLQQMKEL…VSELQLKLNS (143 aa). The segment at 58–219 is interaction with Rab8; that stretch reads MKLNNQAMKG…TPTRTDPISL (162 aa). Residues 186–191 carry the LIR motif; the sequence is DSFVEI. S187 bears the Phosphoserine mark. Coiled coils occupy residues 243–278 and 307–511; these read CLREGNQKVERLEVALREAKERISDFEKKANGHSST and IQVT…DIEE. The segment covering 267–295 has biased composition (basic and acidic residues); the sequence is DFEKKANGHSSTEKQTARRADREKEDKGQ. The tract at residues 267–302 is disordered; that stretch reads DFEKKANGHSSTEKQTARRADREKEDKGQESVGSEV. Position 345 is a phosphoserine (S345). The interaction with HD stretch occupies residues 414–584; that stretch reads TKQQAEKVDK…LQIHVMDCII (171 aa). Residues 415 to 524 form an interaction with MYO6 region; it reads KQQAEKVDKM…RQSLMEMQCR (110 aa). Residues 477–482 carry the UBAN motif; it reads DFHAER. S530 is modified (phosphoserine). A CCHC NOA-type zinc finger spans residues 554 to 584; the sequence is PRSIPIHSCPKCGEVLPDIDTLQIHVMDCII. C562, C565, H578, and C582 together coordinate Zn(2+).

In terms of assembly, self-associates. Interacts with HD, GTF3A, TRAF3, TBK1 and MYO6. Interacts (via UBAN) with ubiquitinated TFRC. Interacts with active GTP-bound Rab8 (RAB8A and/or RAB8B). Interacts with TBC1D17. Binds to linear ubiquitin chains. Interacts with LC3 family members MAP1LC3A, MAP1LC3B, GABARAP, GABARAPL1 and GABARAPL2; OPTN phosphorylation increases the association (at least with MAP1LC3B). Interacts with RAB12; the interaction may be indirect. Interacts with TBK1; this interaction leads to the Golgi localization of TBK1 and its subsequent activation. Interacts with palmitoyltransferase ZDHHC17/HIP14; the interaction does not lead to palmitoylation of OPTN. Interacts with CYLD. Interacts with TOM1; the interaction is indirect and is mediated by MYO6, which acts as a bridge between TOM1 and OPTN. Interacts with USP12; the interaction is independent of USP12 deubiquitinase activity and may be involved in regulation of autophagic flux. In terms of processing, phosphorylated by TBK1, leading to restrict bacterial proliferation in case of infection. In eye, it is expressed in anterior segment, retina, and optic nerve blood vessels (at protein level). Highly expressed in adult liver, heart and testis.

It is found in the cytoplasm. It localises to the perinuclear region. Its subcellular location is the golgi apparatus. The protein resides in the trans-Golgi network. The protein localises to the cytoplasmic vesicle. It is found in the autophagosome. It localises to the recycling endosome. Its function is as follows. Plays an important role in the maintenance of the Golgi complex, in membrane trafficking, in exocytosis, through its interaction with myosin VI and Rab8. Links myosin VI to the Golgi complex and plays an important role in Golgi ribbon formation. Plays a role in the activation of innate immune response during viral infection. Mechanistically, recruits TBK1 at the Golgi apparatus, promoting its trans-phosphorylation after RLR or TLR3 stimulation. In turn, activated TBK1 phosphorylates its downstream partner IRF3 to produce IFN-beta. Plays a neuroprotective role in the eye and optic nerve. May act by regulating membrane trafficking and cellular morphogenesis via a complex that contains Rab8 and huntingtin (HD). Mediates the interaction of Rab8 with the probable GTPase-activating protein TBC1D17 during Rab8-mediated endocytic trafficking, such as that of transferrin receptor (TFRC/TfR); regulates Rab8 recruitment to tubules emanating from the endocytic recycling compartment. Autophagy receptor that interacts directly with both the cargo to become degraded and an autophagy modifier of the MAP1 LC3 family; targets ubiquitin-coated bacteria (xenophagy), such as cytoplasmic Salmonella enterica, and appears to function in the same pathway as SQSTM1 and CALCOCO2/NDP52. This is Optineurin (Optn) from Mus musculus (Mouse).